A 63-amino-acid chain; its full sequence is MSDNDKTVTITQVRSVIGCTQKQKATIQALGLGRPNYSVVKPDNACTRGQIRVVQHLVKIEEN.

The protein belongs to the universal ribosomal protein uL30 family. As to quaternary structure, part of the 50S ribosomal subunit.

The polypeptide is Large ribosomal subunit protein uL30 (Chlorobium chlorochromatii (strain CaD3)).